A 297-amino-acid polypeptide reads, in one-letter code: tRNA dimethylallyltransferase (297 aa).

15 to 22 (GPTASGKS) lines the ATP pocket. 17–22 (TASGKS) lines the substrate pocket. 2 interaction with substrate tRNA regions span residues 40–43 (DSMQ) and 164–168 (QRIVR).

Belongs to the IPP transferase family. In terms of assembly, monomer. It depends on Mg(2+) as a cofactor.

It carries out the reaction adenosine(37) in tRNA + dimethylallyl diphosphate = N(6)-dimethylallyladenosine(37) in tRNA + diphosphate. In terms of biological role, catalyzes the transfer of a dimethylallyl group onto the adenine at position 37 in tRNAs that read codons beginning with uridine, leading to the formation of N6-(dimethylallyl)adenosine (i(6)A). This is tRNA dimethylallyltransferase from Rhizobium etli (strain ATCC 51251 / DSM 11541 / JCM 21823 / NBRC 15573 / CFN 42).